A 711-amino-acid polypeptide reads, in one-letter code: Ribosomal RNA large subunit methyltransferase K/L (711 aa).

One can recognise a THUMP domain in the interval 43–154 (LGYRITLWSR…RGQITIGLNF (112 aa)).

This sequence belongs to the methyltransferase superfamily. RlmKL family.

The protein localises to the cytoplasm. It carries out the reaction guanosine(2445) in 23S rRNA + S-adenosyl-L-methionine = N(2)-methylguanosine(2445) in 23S rRNA + S-adenosyl-L-homocysteine + H(+). It catalyses the reaction guanosine(2069) in 23S rRNA + S-adenosyl-L-methionine = N(2)-methylguanosine(2069) in 23S rRNA + S-adenosyl-L-homocysteine + H(+). Its function is as follows. Specifically methylates the guanine in position 2445 (m2G2445) and the guanine in position 2069 (m7G2069) of 23S rRNA. This chain is Ribosomal RNA large subunit methyltransferase K/L, found in Shewanella sediminis (strain HAW-EB3).